The sequence spans 462 residues: NEDD8-activating enzyme E1 catalytic subunit (462 aa).

The residue at position 2 (alanine 2) is an N-acetylalanine. The tract at residues histidine 53–cysteine 70 is interaction with UBE2M N-terminus. ATP-binding positions include aspartate 100–lysine 124 and isoleucine 148–alanine 171. 2 interaction with UBE2M N-terminus regions span residues arginine 157–isoleucine 161 and proline 192–methionine 217. The interaction with NEDD8 stretch occupies residues leucine 227–proline 229. Cysteine 237 functions as the Glycyl thioester intermediate in the catalytic mechanism. Interaction with NAE1 regions lie at residues methionine 242 to histidine 248 and tyrosine 292 to arginine 295. Positions isoleucine 331–proline 338 are interaction with UBE2M N-terminus. Residues tyrosine 352–glutamate 357 are interaction with NEDD8. The tract at residues serine 368–threonine 462 is interaction with UBE2M core domain.

Belongs to the ubiquitin-activating E1 family. UBA3 subfamily. As to quaternary structure, heterodimer of UBA3 and NAE1. Interacts with NEDD8, UBE2F and UBE2M. Binds ESR1 and ESR2 with bound steroid ligand. Interacts with TBATA.

It catalyses the reaction ATP + [NEDD8 protein] + [E1 NEDD8-activating enzyme]-L-cysteine = AMP + diphosphate + [E1 NEDD8-activating enzyme]-S-[NEDD8 protein]-yl-L-cysteine.. Its pathway is protein modification; protein neddylation. Binding of TP53BP2 to the regulatory subunit NAE1 decreases activity. In terms of biological role, catalytic subunit of the dimeric UBA3-NAE1 E1 enzyme. E1 activates NEDD8 by first adenylating its C-terminal glycine residue with ATP, thereafter linking this residue to the side chain of the catalytic cysteine, yielding a NEDD8-UBA3 thioester and free AMP. E1 finally transfers NEDD8 to the catalytic cysteine of UBE2M. Down-regulates steroid receptor activity. Necessary for cell cycle progression. The sequence is that of NEDD8-activating enzyme E1 catalytic subunit (Uba3) from Mus musculus (Mouse).